The primary structure comprises 759 residues: Phosphoribosylformylglycinamidine synthase subunit PurL (759 aa).

Histidine 48 is a catalytic residue. ATP-binding residues include tyrosine 51 and lysine 91. Glutamate 93 contributes to the Mg(2+) binding site. Residues 94–97 (SHNH) and arginine 116 contribute to the substrate site. Histidine 95 functions as the Proton acceptor in the catalytic mechanism. Residue aspartate 117 coordinates Mg(2+). Glutamine 240 contributes to the substrate binding site. Aspartate 268 is a Mg(2+) binding site. 317–319 (ESQ) serves as a coordination point for substrate. Residues asparagine 501 and glycine 538 each coordinate ATP. Position 539 (asparagine 539) interacts with Mg(2+). Substrate is bound at residue serine 541.

Belongs to the FGAMS family. As to quaternary structure, monomer. Part of the FGAM synthase complex composed of 1 PurL, 1 PurQ and 2 PurS subunits.

It localises to the cytoplasm. The enzyme catalyses N(2)-formyl-N(1)-(5-phospho-beta-D-ribosyl)glycinamide + L-glutamine + ATP + H2O = 2-formamido-N(1)-(5-O-phospho-beta-D-ribosyl)acetamidine + L-glutamate + ADP + phosphate + H(+). Its pathway is purine metabolism; IMP biosynthesis via de novo pathway; 5-amino-1-(5-phospho-D-ribosyl)imidazole from N(2)-formyl-N(1)-(5-phospho-D-ribosyl)glycinamide: step 1/2. In terms of biological role, part of the phosphoribosylformylglycinamidine synthase complex involved in the purines biosynthetic pathway. Catalyzes the ATP-dependent conversion of formylglycinamide ribonucleotide (FGAR) and glutamine to yield formylglycinamidine ribonucleotide (FGAM) and glutamate. The FGAM synthase complex is composed of three subunits. PurQ produces an ammonia molecule by converting glutamine to glutamate. PurL transfers the ammonia molecule to FGAR to form FGAM in an ATP-dependent manner. PurS interacts with PurQ and PurL and is thought to assist in the transfer of the ammonia molecule from PurQ to PurL. This is Phosphoribosylformylglycinamidine synthase subunit PurL from Chlorobaculum tepidum (strain ATCC 49652 / DSM 12025 / NBRC 103806 / TLS) (Chlorobium tepidum).